A 390-amino-acid chain; its full sequence is Pyruvate dehydrogenase E1 component subunit alpha, somatic form, mitochondrial (390 aa).

A mitochondrion-targeting transit peptide spans 1–29 (MRKMLAAVSRVLSGASQKPASRVLVASRN). Position 63 is an N6-acetyllysine; alternate (Lys63). An N6-succinyllysine; alternate modification is found at Lys63. 11 residues coordinate pyruvate: His92, Tyr118, Arg119, Ala157, Gly165, Val167, Asp196, Gly197, Ala198, Asn225, and Tyr227. The thiamine diphosphate site is built by Tyr118 and Arg119. Gly165, Val167, Asp196, Gly197, Ala198, and Asn225 together coordinate thiamine diphosphate. Asp196 contributes to the Mg(2+) binding site. The Mg(2+) site is built by Asn225 and Tyr227. Ser232 carries the post-translational modification Phosphoserine; by PDK1. At Lys244 the chain carries N6-acetyllysine; alternate. An N6-succinyllysine; alternate modification is found at Lys244. The residue at position 277 (Lys277) is an N6-succinyllysine. His292 is a binding site for thiamine diphosphate. Phosphoserine; by PDK1, PDK2, PDK3 and PDK4 is present on Ser293. Position 295 is a phosphoserine (Ser295). At Ser300 the chain carries Phosphoserine; by PDK1, PDK2, PDK3 and PDK4. Tyr301 carries the phosphotyrosine modification. At Lys313 the chain carries N6-acetyllysine; alternate. The residue at position 313 (Lys313) is an N6-succinyllysine; alternate. Residues Lys321 and Lys336 each carry the N6-acetyllysine modification. Lys385 is modified (N6-succinyllysine).

As to quaternary structure, heterotetramer of two PDHA1 and two PDHB subunits. The heterotetramer interacts with DLAT, and is part of the multimeric pyruvate dehydrogenase complex that contains multiple copies of pyruvate dehydrogenase (E1), dihydrolipoamide acetyltransferase (DLAT, E2) and lipoamide dehydrogenase (DLD, E3). These subunits are bound to an inner core composed of about 48 DLAT and 12 PDHX molecules. The cofactor is thiamine diphosphate. Requires Mg(2+) as cofactor. Phosphorylation at Ser-232, Ser-293 and Ser-300 by PDK family kinases inactivates the enzyme; for this phosphorylation at a single site is sufficient. Phosphorylation at Ser-293 interferes with access to active site, and thereby inactivates the enzyme. Dephosphorylation at all three sites, i.e. at Ser-232, Ser-293 and Ser-300, is required for reactivation. In terms of processing, acetylation alters the phosphorylation pattern. Deacetylated by SIRT3.

The protein localises to the mitochondrion matrix. The catalysed reaction is N(6)-[(R)-lipoyl]-L-lysyl-[protein] + pyruvate + H(+) = N(6)-[(R)-S(8)-acetyldihydrolipoyl]-L-lysyl-[protein] + CO2. Pyruvate dehydrogenase activity is inhibited by phosphorylation of PDHA1; it is reactivated by dephosphorylation. The pyruvate dehydrogenase complex catalyzes the overall conversion of pyruvate to acetyl-CoA and CO(2), and thereby links the glycolytic pathway to the tricarboxylic cycle. This chain is Pyruvate dehydrogenase E1 component subunit alpha, somatic form, mitochondrial (PDHA1), found in Pan troglodytes (Chimpanzee).